A 424-amino-acid polypeptide reads, in one-letter code: Histidine--tRNA ligase (424 aa).

The protein belongs to the class-II aminoacyl-tRNA synthetase family. As to quaternary structure, homodimer.

It localises to the cytoplasm. The catalysed reaction is tRNA(His) + L-histidine + ATP = L-histidyl-tRNA(His) + AMP + diphosphate + H(+). The sequence is that of Histidine--tRNA ligase from Shigella sonnei (strain Ss046).